A 349-amino-acid polypeptide reads, in one-letter code: Palmitoyltransferase PFA5 (349 aa).

Helical transmembrane passes span 19 to 39 and 57 to 77; these read LIPF…CHQF and LIIV…LMLV. The region spanning 126–176 is the DHHC domain; that stretch reads IWCSNCQSLKMSRTHHSTKVGYCVPRFDHYCVWIGTVLGRLNYKLFVQFTF. The active-site S-palmitoyl cysteine intermediate is the cysteine 156. The next 2 helical transmembrane spans lie at 170–190 and 204–224; these read LFVQ…ISIA and VYAV…LFLT.

This sequence belongs to the DHHC palmitoyltransferase family. PFA5 subfamily.

The protein resides in the membrane. The catalysed reaction is L-cysteinyl-[protein] + hexadecanoyl-CoA = S-hexadecanoyl-L-cysteinyl-[protein] + CoA. The polypeptide is Palmitoyltransferase PFA5 (PFA5) (Kluyveromyces lactis (strain ATCC 8585 / CBS 2359 / DSM 70799 / NBRC 1267 / NRRL Y-1140 / WM37) (Yeast)).